A 138-amino-acid polypeptide reads, in one-letter code: Small ribosomal subunit protein uS11c (138 aa).

Positions 1–22 (MAKPILRIGSRKNTRSGSRKNV) are disordered. The segment covering 9 to 22 (GSRKNTRSGSRKNV) has biased composition (basic residues).

The protein belongs to the universal ribosomal protein uS11 family. As to quaternary structure, part of the 30S ribosomal subunit.

It is found in the plastid. It localises to the chloroplast. The sequence is that of Small ribosomal subunit protein uS11c from Arabis hirsuta (Hairy rock-cress).